A 32-amino-acid chain; its full sequence is 24 kDa flagellin (32 aa).

The protein belongs to the archaeal flagellin family. Glycosylated.

Its subcellular location is the archaeal flagellum. Flagellin is the subunit protein which polymerizes to form the filaments of archaeal flagella. In Methanospirillum hungatei, this protein is 24 kDa flagellin.